Consider the following 309-residue polypeptide: Vacuolar membrane protein YOR292C (309 aa).

The Vacuolar segment spans residues 1-52; sequence MPLQLFGRDQIVVHYDNGNMSNDDQNHQSVLGSWTRRAAAALRTLMNKRIQR. The N-linked (GlcNAc...) asparagine glycan is linked to asparagine 19. The chain crosses the membrane as a helical span at residues 53-73; sequence ITLTHWLLLVIWVTSLWKFTS. At 74–81 the chain is on the cytoplasmic side; sequence HYRQLYAN. The helical transmembrane segment at 82–102 threads the bilayer; sequence SAVFATLCTNILLFGISDILA. Over 103 to 183 the chain is Vacuolar; the sequence is QSIACFYSYH…KTDTFDFFRW (81 aa). N-linked (GlcNAc...) asparagine glycosylation is present at asparagine 121. The helical transmembrane segment at 184–204 threads the bilayer; that stretch reads GCFMFWGFFISFFQAPWYKFL. Residues 205–225 are Cytoplasmic-facing; the sequence is NFFYTEDPTVVQVFERVLSDQ. Residues 226-246 form a helical membrane-spanning segment; that stretch reads LLYSPISLYCFFMFSNYVMEG. The Vacuolar portion of the chain corresponds to 247 to 260; the sequence is GDKDTLGKKIQRLY. A helical transmembrane segment spans residues 261–281; it reads ISTLGCNYLVWPMVQFINFLI. The Cytoplasmic portion of the chain corresponds to 282–309; it reads MPRDFQAPFSSSVGVVWNCFLSMRNASK.

It belongs to the peroxisomal membrane protein PXMP2/4 family. Post-translationally, N-glycosylated.

Its subcellular location is the vacuole membrane. This is Vacuolar membrane protein YOR292C from Saccharomyces cerevisiae (strain ATCC 204508 / S288c) (Baker's yeast).